The chain runs to 138 residues: MSATLRLLCLMACCVALAVANRPNYGGSGYGASYGDVVKAAETAEAQASALTNAAGAAASAAKLDGADWNSLNRYGWEQGRPLLAKPYGPLDPLYAAALPPRSFVAEVDPVFKKSQYGGSYGENAYLKTDAKLGVVAI.

A signal peptide spans 1–20; that stretch reads MSATLRLLCLMACCVALAVA.

The protein belongs to the chorion protein S16 family.

The protein localises to the secreted. Functionally, chorion membrane (egg shell) protein; plays a role in protecting the egg from the environment. This is Chorion protein S16 (Cp16) from Drosophila melanogaster (Fruit fly).